The sequence spans 514 residues: uncharacterized protein (514 aa).

This sequence to E.coli YjjI.

This is an uncharacterized protein from Haemophilus influenzae (strain ATCC 51907 / DSM 11121 / KW20 / Rd).